The chain runs to 328 residues: Carbonic anhydrase-related protein 11 (328 aa).

Positions 1–23 are cleaved as a signal peptide; it reads MGAAARLSAPRALVLWAALGAAA. The Alpha-carbonic anhydrase domain occupies 33-303; the sequence is DWWSYKDNLQ…LAHRALRGNR (271 aa). N-linked (GlcNAc...) asparagine glycosylation is found at N118, N170, and N260. A disordered region spans residues 299 to 328; the sequence is LRGNRDPRHPERRCRGPNYRLHVDGAPHGR. The segment covering 319 to 328 has biased composition (basic and acidic residues); the sequence is LHVDGAPHGR.

The protein belongs to the alpha-carbonic anhydrase family.

The protein localises to the secreted. In terms of biological role, does not have a catalytic activity. In Pongo abelii (Sumatran orangutan), this protein is Carbonic anhydrase-related protein 11 (CA11).